Consider the following 663-residue polypeptide: MSKGPILVTCGLPYTNGPCHLGHLRTYVPGDMYVRYLRHRGEEVVFVCGSDNHGTPIVVSAEEQGVTPKELSLKYHHHFEETFIKMGIRFDRFGMTDGKANHHRTREMMQRLIDKGYIYSATVSQSYCTTCSRFLPDRYVEGICPHCGAVARGDECDQGCGKHLEPGEIRDPVCKVCGTRAELRSQEHFFFKLSAFKEFLGTFLKGVRGTDNAKNYALGWVNDDLHDWCITRTLDWGVKFPGRDDLVVYVWVDAPVGYIAFTEEWAAAHGRDWREFWCGDGEITHFIGGDITYHHCIFWPALLKGAGYGVPSAIVASGMLKIDDHKFSKSRGYVVWTNDDYLDLGLPADYLRYYLLAYTSHTKELNFSWQAFADRVNNELVNTFGNFVHRTLHFAHAQGIGIPDLDADQEILQRIDETIAAVDTAMDAFEFKNAVDAVMTLAAFGNNYIQTAAPWKLIKTDRPAAVQVIRNCLQLVRALALLIDPTMPETASKIWMMLGETDQVRDHRTSEATEPLTAGELAPPTTLFARMEEKEVATLEKTLMMRVEEAEKRGQPTEELISIDEFGKMKLIVGTVISAEKIPKSSKLLKLIVDLGSERRQIVSGIAKFYDPEHLVGSSVVVIANLQPVTIFGVESRGMILAAGDNAALLTPNQAVEPGTPIR.

The 'HIGH' region signature appears at 13 to 23 (PYTNGPCHLGH). Zn(2+) contacts are provided by cysteine 144, cysteine 147, cysteine 156, and cysteine 160. A 'KMSKS' region motif is present at residues 326 to 330 (KFSKS). Lysine 329 serves as a coordination point for ATP. Positions 565 to 663 (EFGKMKLIVG…QAVEPGTPIR (99 aa)) constitute a tRNA-binding domain.

The protein belongs to the class-I aminoacyl-tRNA synthetase family. MetG type 1 subfamily. Homodimer. Zn(2+) serves as cofactor.

Its subcellular location is the cytoplasm. It catalyses the reaction tRNA(Met) + L-methionine + ATP = L-methionyl-tRNA(Met) + AMP + diphosphate. Is required not only for elongation of protein synthesis but also for the initiation of all mRNA translation through initiator tRNA(fMet) aminoacylation. The protein is Methionine--tRNA ligase of Methanosphaerula palustris (strain ATCC BAA-1556 / DSM 19958 / E1-9c).